The primary structure comprises 332 residues: MKVAVLGAGAWGTALAGHLAARHDTVLWARDATLISELSTSHENARYLAGVALPSTLRFQANLELALNHALDDAALCVVATPVAGLRAMLRTMRDMRKVPSHIVWLCKGFEADSQLMPHQVVAQELSGHTSNGPLSGPSFAREVGQGLPVALTVASASAACRERTVAAFHHGAMRIYSGDDVVGVEVGGAVKNVLAIATGIADGLGLGLNARAALITRGLAEMSRLGAALGGRAETFTGLTGLGDLILTATGDLSRNRTVGMQLASGRSLDDILNALGHVAEGVRCARSVLSLAQSHAIDMPITQAVCDVLFNGVAPRDAVSALLRRDAKPE.

Residues Trp11, Arg30, and Lys108 each coordinate NADPH. 3 residues coordinate sn-glycerol 3-phosphate: Lys108, Gly137, and Ser139. Residue Ala141 participates in NADPH binding. Sn-glycerol 3-phosphate contacts are provided by Lys192, Asp245, Ser255, Arg256, and Asn257. Lys192 (proton acceptor) is an active-site residue. Residue Arg256 coordinates NADPH. Residues Val280 and Glu282 each coordinate NADPH.

It belongs to the NAD-dependent glycerol-3-phosphate dehydrogenase family.

It is found in the cytoplasm. It catalyses the reaction sn-glycerol 3-phosphate + NAD(+) = dihydroxyacetone phosphate + NADH + H(+). The enzyme catalyses sn-glycerol 3-phosphate + NADP(+) = dihydroxyacetone phosphate + NADPH + H(+). It participates in membrane lipid metabolism; glycerophospholipid metabolism. In terms of biological role, catalyzes the reduction of the glycolytic intermediate dihydroxyacetone phosphate (DHAP) to sn-glycerol 3-phosphate (G3P), the key precursor for phospholipid synthesis. In Paraburkholderia phymatum (strain DSM 17167 / CIP 108236 / LMG 21445 / STM815) (Burkholderia phymatum), this protein is Glycerol-3-phosphate dehydrogenase [NAD(P)+].